The sequence spans 109 residues: Protein phosphatase 1 regulatory subunit 1C (109 aa).

The tract at residues 25–109 (AEQIRKRRPT…TNEREEQRDH (85 aa)) is disordered. Over residues 45 to 54 (NPPEIDDKRG) the composition is skewed to basic and acidic residues. Over residues 55-75 (PNTQGELQNASPKQRKQSVYT) the composition is skewed to polar residues. Basic and acidic residues predominate over residues 100 to 109 (TNEREEQRDH).

It belongs to the protein phosphatase inhibitor 1 family.

It is found in the cytoplasm. Functionally, may increase cell susceptibility to TNF-induced apoptosis. This is Protein phosphatase 1 regulatory subunit 1C (PPP1R1C) from Homo sapiens (Human).